The sequence spans 141 residues: Large ribosomal subunit protein uL11 (141 aa).

It belongs to the universal ribosomal protein uL11 family. As to quaternary structure, part of the ribosomal stalk of the 50S ribosomal subunit. Interacts with L10 and the large rRNA to form the base of the stalk. L10 forms an elongated spine to which L12 dimers bind in a sequential fashion forming a multimeric L10(L12)X complex. In terms of processing, one or more lysine residues are methylated.

Its function is as follows. Forms part of the ribosomal stalk which helps the ribosome interact with GTP-bound translation factors. This is Large ribosomal subunit protein uL11 from Exiguobacterium sibiricum (strain DSM 17290 / CCUG 55495 / CIP 109462 / JCM 13490 / 255-15).